We begin with the raw amino-acid sequence, 213 residues long: Thymidylate kinase (213 aa).

Residue 9–16 (GVEGCGKT) coordinates ATP.

This sequence belongs to the thymidylate kinase family.

The enzyme catalyses dTMP + ATP = dTDP + ADP. Its function is as follows. Phosphorylation of dTMP to form dTDP in both de novo and salvage pathways of dTTP synthesis. In Geotalea uraniireducens (strain Rf4) (Geobacter uraniireducens), this protein is Thymidylate kinase.